A 595-amino-acid polypeptide reads, in one-letter code: Putative histone-lysine N-methyltransferase PRDM6 (595 aa).

Positions 27 to 90 (FPHGGAGPLK…STPASSSTSA (64 aa)) are disordered. Residues 30 to 40 (GGAGPLKGSGA) show a composition bias toward gly residues. Over residues 49 to 59 (PLQPPPPPPPP) the composition is skewed to pro residues. Residues 71–90 (PRPASLSSASSTPASSSTSA) show a composition bias toward low complexity. Residues 246–365 (REVCLCTSTV…RGTELLVWYN (120 aa)) form the SET domain. The segment at 473–495 (WKCGQCFKTFTQRILLQMHVCTQ) adopts a C2H2-type 1; degenerate zinc-finger fold. 2 C2H2-type zinc fingers span residues 501–523 (YQCGHCSQSFSQPSELRNHVVTH) and 529–551 (FKCGYCGRAFAGATTLNNHIRTH). The segment at 557–579 (FKCERCERSFTQATQLSRHQRMP) adopts a C2H2-type 4; degenerate zinc-finger fold.

The protein belongs to the class V-like SAM-binding methyltransferase superfamily. In terms of assembly, interacts with HDAC1, HDAC2, HDAC3, CBX1 and EP300.

It localises to the nucleus. It carries out the reaction L-lysyl(20)-[histone H4] + S-adenosyl-L-methionine = N(6)-methyl-L-lysyl(20)-[histone H4] + S-adenosyl-L-homocysteine + H(+). In terms of biological role, putative histone methyltransferase that acts as a transcriptional repressor of smooth muscle gene expression. Promotes the transition from differentiated to proliferative smooth muscle by suppressing differentiation and maintaining the proliferative potential of vascular smooth muscle cells. Also plays a role in endothelial cells by inhibiting endothelial cell proliferation, survival and differentiation. It is unclear whether it has histone methyltransferase activity in vivo. According to some authors, it does not act as a histone methyltransferase by itself and represses transcription by recruiting EHMT2/G9a. According to others, it possesses histone methyltransferase activity when associated with other proteins and specifically methylates 'Lys-20' of histone H4 in vitro. 'Lys-20' methylation represents a specific tag for epigenetic transcriptional repression. The chain is Putative histone-lysine N-methyltransferase PRDM6 (PRDM6) from Homo sapiens (Human).